Here is a 586-residue protein sequence, read N- to C-terminus: Mitochondrial tRNA methylthiotransferase CDK5RAP1 (586 aa).

The N-terminal 30 residues, 1-30 (MHPLQRVFRAQRLSAPLTSMCWVLLRTFRA), are a transit peptide targeting the mitochondrion. Residues 68-90 (ASVPQEKPSSPEVEDPPPYLSGD) are disordered. The MTTase N-terminal domain maps to 97–217 (RKVYLETYGC…LPRLLAVVES (121 aa)). 6 residues coordinate [4Fe-4S] cluster: C106, C142, C180, C255, C259, and C262. The Radical SAM core domain maps to 241-495 (SPSATSAFVS…ITVFREEASK (255 aa)). The TRAM domain occupies 498-573 (ATSVGCTQLV…SQTLKGHILC (76 aa)).

This sequence belongs to the methylthiotransferase family. MiaB subfamily. Interacts with CDK5R1 (p35 form). CDK5RAP1, CDK5RAP2 and CDK5RAP3 show competitive binding to CDK5R1. Forms a complex with CDK5R1 and CDK5. [4Fe-4S] cluster is required as a cofactor. In terms of tissue distribution, expressed in brain.

It is found in the mitochondrion inner membrane. The enzyme catalyses N(6)-dimethylallyladenosine(37) in tRNA + (sulfur carrier)-SH + AH2 + 2 S-adenosyl-L-methionine = 2-methylsulfanyl-N(6)-dimethylallyladenosine(37) in tRNA + (sulfur carrier)-H + 5'-deoxyadenosine + L-methionine + A + S-adenosyl-L-homocysteine + 2 H(+). In terms of biological role, methylthiotransferase that catalyzes the conversion of N6-(dimethylallyl)adenosine (i(6)A) to 2-methylthio-N6-(dimethylallyl)adenosine (ms(2)i(6)A) at position 37 (adjacent to the 3'-end of the anticodon) of four mitochondrial DNA-encoded tRNAs (Ser(UCN), Phe, Tyr and Trp). Essential for efficient and highly accurate protein translation by the ribosome. Specifically inhibits CDK5 activation by CDK5R1. Essential for efficient mitochondrial protein synthesis and respiratory chain. This is Mitochondrial tRNA methylthiotransferase CDK5RAP1 (Cdk5rap1) from Rattus norvegicus (Rat).